The primary structure comprises 246 residues: MAGAPDERRRGPAAGEQLQQQHVSCQVFPERLAQGNPQQGFFSSFFTSNQKCQLRLLKTLETNPYVKLLLDAMKHSGCAVNKDRHFSCEDCNGNVSGGFDASTSQIVLCQNNIHNQAHMNRVVTHELIHAFDHCRAHVDWFTNIRHLACSEVRAANLSGDCSLVNEIFRLHFGLKQHHQTCVRDRATLSILAVRNISKEVAKKAVDEVFESCFNDHEPFGRIPHNKTYARYAHRDFENRDRYYSNI.

H125 contacts a divalent metal cation. E126 is an active-site residue. Residue H129 coordinates a divalent metal cation.

This sequence belongs to the peptidase M76 family. In terms of assembly, interacts with XRCC6.

This Homo sapiens (Human) protein is Mitochondrial inner membrane protease ATP23 homolog.